Consider the following 1231-residue polypeptide: RNA-binding protein 33 (1231 aa).

Residues 1–13 show a composition bias toward gly residues; sequence MAAALGAGGGAGA. Disordered regions lie at residues 1–168 and 219–261; these read MAAA…EEEQ and SQVA…FKTE. N-acetylalanine is present on Ala-2. The span at 20-36 shows a compositional bias: basic and acidic residues; that stretch reads QFDKPGAERSWRRRAAD. Residues 37 to 49 are compositionally biased toward acidic residues; that stretch reads EDWDSELEDDLLG. Ser-41 bears the Phosphoserine mark. Residues 82-108 show a composition bias toward polar residues; sequence FSSQGVTISLNTTSGIVTSFELSDNTN. Composition is skewed to acidic residues over residues 112 to 124 and 153 to 168; these read GEQE…GDDE and LTED…EEEQ. Residues 224-240 are compositionally biased toward basic and acidic residues; the sequence is ETHEGGMETLELQKDIK. A compositionally biased stretch (acidic residues) spans 241–252; it reads EESDEEDDDDEE. A phosphoserine mark is found at Ser-243 and Ser-271. Disordered stretches follow at residues 297-436 and 452-761; these read FEER…KNIH and PLLP…NLRE. Over residues 305 to 316 the composition is skewed to basic residues; it reads KQGRYGSRRGGR. Over residues 327–344 the composition is skewed to basic and acidic residues; it reads GDQRRDNSERGRMKEHRP. Residues 360–379 show a composition bias toward pro residues; the sequence is LIPPPQPQPPPPPPPPPPQQ. Residues 380-398 show a composition bias toward low complexity; it reads QPIRSLFQQQQLQPLLPLQ. Over residues 469–483 the composition is skewed to pro residues; that stretch reads FPGPPEFPQHTPGPV. At Arg-520 the chain carries Asymmetric dimethylarginine. Pro residues-rich tracts occupy residues 531 to 540, 604 to 618, 632 to 647, and 661 to 682; these read SPPPPPPPPT, FIPP…PGQP, LHPP…PQPQ, and PLQP…PPQH. 2 stretches are compositionally biased toward polar residues: residues 713–728 and 736–759; these read QTAQ…QCTP and AASQ…NSNL. Phosphoserine occurs at positions 792 and 816. Disordered stretches follow at residues 796–840, 876–932, and 998–1080; these read RAVV…ETRL, ERLA…FPGA, and ETPH…MRQQ. Basic and acidic residues predominate over residues 820–829; it reads QPKEEAKPEA. Residues 840–891 are a coiled coil; sequence LYRLKIEEQKRLREEILKQKELRRQQQAGARKKELLERLAQQQQQQQQQQHQ. The segment covering 880–901 has biased composition (low complexity); the sequence is QQQQQQQQQQHQPQQQQQQPQQ. Phosphoserine is present on residues Ser-1002 and Ser-1010. Lys-1019 participates in a covalent cross-link: Glycyl lysine isopeptide (Lys-Gly) (interchain with G-Cter in SUMO2). Phosphoserine is present on residues Ser-1032 and Ser-1051.

In terms of assembly, associates with the NXF1-NXT1 RNA export complex. Interacts with ALKBH5; facilitating ALKBH5 recruitment to m6A-containing transcripts. Interacts with SENP1; promoting ALKBH5 deSUMOylation and subsequent activation.

It localises to the nucleus. The protein resides in the cytoplasm. Functionally, RNA reader protein, which recognizes and binds specific RNAs, thereby regulating RNA metabolic processes, such as mRNA export, mRNA stability and/or translation. Binds a subset of intronless RNAs containing GC-rich elements, such as NORAD, and promotes their nuclear export by recruiting target RNAs to components of the NXF1-NXT1 RNA export machinery. Specifically recognizes and binds N6-methyladenosine (m6A)-containing mRNAs, promoting their demethylation by ALKBH5. Acts as an molecular adapter, which (1) promotes ALKBH5 recruitment to m6A-containing transcripts and (2) activates ALKBH5 demethylase activity by recruiting SENP1, leading to ALKBH5 deSUMOylation and subsequent activation. The polypeptide is RNA-binding protein 33 (Mus musculus (Mouse)).